A 160-amino-acid polypeptide reads, in one-letter code: Putative flagellin YvzB (160 aa).

The protein belongs to the bacterial flagellin family. In terms of assembly, interacts with FliW.

It localises to the bacterial flagellum. The polypeptide is Putative flagellin YvzB (yvzB) (Bacillus subtilis (strain 168)).